Consider the following 210-residue polypeptide: Protein GrpE (210 aa).

Disordered stretches follow at residues 1–40 (MTDDTTKNGPDATAADAAADATAYVENETAQQEPAQPDPI) and 191–210 (KGGPKPAEAETNSVFDEKDA). The segment covering 11–23 (DATAADAAADATA) has biased composition (low complexity).

The protein belongs to the GrpE family. As to quaternary structure, homodimer.

It localises to the cytoplasm. In terms of biological role, participates actively in the response to hyperosmotic and heat shock by preventing the aggregation of stress-denatured proteins, in association with DnaK and GrpE. It is the nucleotide exchange factor for DnaK and may function as a thermosensor. Unfolded proteins bind initially to DnaJ; upon interaction with the DnaJ-bound protein, DnaK hydrolyzes its bound ATP, resulting in the formation of a stable complex. GrpE releases ADP from DnaK; ATP binding to DnaK triggers the release of the substrate protein, thus completing the reaction cycle. Several rounds of ATP-dependent interactions between DnaJ, DnaK and GrpE are required for fully efficient folding. This Rhizobium johnstonii (strain DSM 114642 / LMG 32736 / 3841) (Rhizobium leguminosarum bv. viciae) protein is Protein GrpE.